The following is a 104-amino-acid chain: Phosphoribosyl-ATP pyrophosphatase (104 aa).

It belongs to the PRA-PH family.

It localises to the cytoplasm. The catalysed reaction is 1-(5-phospho-beta-D-ribosyl)-ATP + H2O = 1-(5-phospho-beta-D-ribosyl)-5'-AMP + diphosphate + H(+). The protein operates within amino-acid biosynthesis; L-histidine biosynthesis; L-histidine from 5-phospho-alpha-D-ribose 1-diphosphate: step 2/9. This is Phosphoribosyl-ATP pyrophosphatase from Rhizobium rhizogenes (strain K84 / ATCC BAA-868) (Agrobacterium radiobacter).